The chain runs to 187 residues: MKSGQAEIMETSKGIQKSGLMSRRIAILEFILRIVAFFNTIGSAILMGTTHETLPFFTQFIRFQAEYNDLPALTFFVVANAVVSGYLILSLTLAFVHIVKRKTQNTRILLIILDVAMLGLLTSGASSAAAIVYLAHNGNNKTNWFAICQQFNSFCERISGSLIGSFIAIVLLILLILLSAIALSRRH.

Over 1 to 24 the chain is Cytoplasmic; that stretch reads MKSGQAEIMETSKGIQKSGLMSRR. The helical transmembrane segment at 25-45 threads the bilayer; that stretch reads IAILEFILRIVAFFNTIGSAI. Over 46 to 74 the chain is Extracellular; it reads LMGTTHETLPFFTQFIRFQAEYNDLPALT. The chain crosses the membrane as a helical span at residues 75–95; that stretch reads FFVVANAVVSGYLILSLTLAF. At 96–107 the chain is on the cytoplasmic side; it reads VHIVKRKTQNTR. Residues 108-128 traverse the membrane as a helical segment; that stretch reads ILLIILDVAMLGLLTSGASSA. At 129-161 the chain is on the extracellular side; sequence AAIVYLAHNGNNKTNWFAICQQFNSFCERISGS. Asn140 carries an N-linked (GlcNAc...) asparagine glycan. A helical membrane pass occupies residues 162–182; sequence LIGSFIAIVLLILLILLSAIA. Over 183–187 the chain is Cytoplasmic; that stretch reads LSRRH.

It belongs to the Casparian strip membrane proteins (CASP) family. Homodimer and heterodimers with other CASP proteins. Interacts with CASP1, CASP3 and CASP4.

It localises to the cell membrane. In terms of biological role, regulates membrane-cell wall junctions and localized cell wall deposition. Required for establishment of the Casparian strip membrane domain (CSD) and the subsequent formation of Casparian strips, a cell wall modification of the root endodermis that determines an apoplastic barrier between the intraorganismal apoplasm and the extraorganismal apoplasm and prevents lateral diffusion. In Arabidopsis thaliana (Mouse-ear cress), this protein is Casparian strip membrane protein 5 (CASP5).